The chain runs to 572 residues: Laccase-3 (572 aa).

An N-terminal signal peptide occupies residues 1 to 18 (MARTTFLVSVSLFVSAVL). Plastocyanin-like domains follow at residues 21-145 (TVEY…LVIY) and 157-304 (IDDE…LIYE). Cu cation is bound by residues His82, His84, His127, and His129. A disulfide bond links Cys103 and Cys561. 5 N-linked (GlcNAc...) asparagine glycosylation sites follow: Asn182, Asn228, Asn294, Asn367, and Asn405. The Plastocyanin-like 3 domain occupies 422-540 (DMPTLLKILT…EGFAMVFAEA (119 aa)). 7 residues coordinate Cu cation: His470, His473, His475, His522, Cys523, His524, and His528.

This sequence belongs to the multicopper oxidase family. As to quaternary structure, homodimer. It depends on Cu cation as a cofactor. In mycelia, at a lower level than LCC4.

The protein resides in the secreted. The enzyme catalyses 4 hydroquinone + O2 = 4 benzosemiquinone + 2 H2O. In terms of biological role, lignin degradation and detoxification of lignin-derived products. This is Laccase-3 (LCC3) from Thanatephorus cucumeris (Black scurf of potato).